A 184-amino-acid chain; its full sequence is MKNVTDSFVSLGHWPSAGSFGWNTDILATNLINLSVVIGVLIFFGKGVLSDLLDNRKQRILNTIRNSEELRGGAIEQLEKARARLRKMEMEADQFRVNGYSEIERDKWNLINSTSKTLEQFENFKNETIQFEQQRAINQVRQRVFQQALQGALGTLNSCLNKELHLRTISANIGILGAMKEITD.

Residues 27 to 49 (LATNLINLSVVIGVLIFFGKGVL) form a helical membrane-spanning segment.

The protein belongs to the ATPase B chain family. As to quaternary structure, F-type ATPases have 2 components, F(1) - the catalytic core - and F(0) - the membrane proton channel. F(1) has five subunits: alpha(3), beta(3), gamma(1), delta(1), epsilon(1). F(0) has four main subunits: a(1), b(1), b'(1) and c(10-14). The alpha and beta chains form an alternating ring which encloses part of the gamma chain. F(1) is attached to F(0) by a central stalk formed by the gamma and epsilon chains, while a peripheral stalk is formed by the delta, b and b' chains.

The protein resides in the plastid. Its subcellular location is the chloroplast thylakoid membrane. Functionally, f(1)F(0) ATP synthase produces ATP from ADP in the presence of a proton or sodium gradient. F-type ATPases consist of two structural domains, F(1) containing the extramembraneous catalytic core and F(0) containing the membrane proton channel, linked together by a central stalk and a peripheral stalk. During catalysis, ATP synthesis in the catalytic domain of F(1) is coupled via a rotary mechanism of the central stalk subunits to proton translocation. Component of the F(0) channel, it forms part of the peripheral stalk, linking F(1) to F(0). This chain is ATP synthase subunit b, chloroplastic, found in Jasminum nudiflorum (Winter jasmine).